The chain runs to 130 residues: Large ribosomal subunit protein bL19 (130 aa).

Belongs to the bacterial ribosomal protein bL19 family.

This protein is located at the 30S-50S ribosomal subunit interface and may play a role in the structure and function of the aminoacyl-tRNA binding site. In Parvibaculum lavamentivorans (strain DS-1 / DSM 13023 / NCIMB 13966), this protein is Large ribosomal subunit protein bL19.